The sequence spans 885 residues: MSLFKARDWWSTVLGEKEEFDQGCLCLADVDNSGNGHDKIIVGSFMGYLRIFSPHSVKAGGGPQAEDLLLEVHLRDPVLQVEVGKFVSGTEMLHLAVLHSRKLCVYSVSGTLGNVEHGNQYQIKLMYEHHLQRTACNMTYGPFGGVKGRDLICIQSLDGMLMVFEQESYAFGRFLPGFLLPGPLAYSPRTDSFITVSSCRQVESYKYQVLAFATDADKKQEMEQQKLGSGKRLVVDWTLNIGEQALDICIFPLNQSASSVFVLGERNFFCLKDNGQIRFMKKLGYNPSCFLPYCSVSEGTINTLIGNHNHMLHIYQDVTLKWATQLPHVPVAVRVGCFHDLKGVIVTLSDDGHLQCSYLGTDPSLFQAPKVESRELNYDELDVELKELQKIIKDVKLQGVWPLTEQEDDLKVSASVSSTLDSVSQATNVEPGADSVPSITVKITLQNRVVLQKVKLSIYVQPPLQLTCDQFTFDFTVPDMTSSVAFSVYLKRNYTPSELEGNAVVSYSRPTDRNPDGIPRVVQCKFRLPLKLICLPGQPSKTASHKLTIDTNKSPVSLLGLFPDFANPSDDDQVNVMGFRLLGGARVTLLASRTSQRYRIQSEQFEDLWLITNELILRLQEHFEKQGTKDFSCSFSGCVPLQEYFELIDHHFELRINGKKLEELLSERAVQFRAIQRRLLTRFRDKTPAPLQHLDTLLDGTYKQVIALADAIEENQDRLLQSFSGLKSATHLLILLIRLWQRLSADQTAILEAAFLPLQEDTQELGWEETVDAAIAYLLKTCLSKSSKEQALNLSSQLNIPKDTSRLKKHITLLCDRLAKGGRLCVSTDAAAPQAMVVPGGCTPIPESDLEERSLDDSTELFTNHKHLMTEPPMPEVSARQGVLE.

The tract at residues M1 to Q406 is seven-bladed beta-propeller. The interaction with LZTL1 stretch occupies residues R684–E764.

In terms of assembly, part of BBSome complex, that contains BBS1, BBS2, BBS4, BBS5, BBS7, BBS8/TTC8, BBS9 and BBIP10. Interacts with LZTL1; the interaction mediates the association of LZTL1 with the BBsome complex and regulates BBSome ciliary trafficking.

Its subcellular location is the cell projection. The protein resides in the cilium membrane. It is found in the cytoplasm. It localises to the cytoskeleton. The protein localises to the microtubule organizing center. Its subcellular location is the centrosome. The protein resides in the centriolar satellite. The BBSome complex is thought to function as a coat complex required for sorting of specific membrane proteins to the primary cilia. The BBSome complex is required for ciliogenesis but is dispensable for centriolar satellite function. This ciliogenic function is mediated in part by the Rab8 GDP/GTP exchange factor, which localizes to the basal body and contacts the BBSome. Rab8(GTP) enters the primary cilium and promotes extension of the ciliary membrane. Firstly the BBSome associates with the ciliary membrane and binds to RAB3IP/Rabin8, the guanosyl exchange factor (GEF) for Rab8 and then the Rab8-GTP localizes to the cilium and promotes docking and fusion of carrier vesicles to the base of the ciliary membrane. Required for proper BBSome complex assembly and its ciliary localization. The sequence is that of Protein PTHB1 (Bbs9) from Mus musculus (Mouse).